A 93-amino-acid chain; its full sequence is Putative nuclease p44 (93 aa).

Positions 5 to 84 constitute a VRR-NUC domain; that stretch reads REDSIEKHLV…HQVIVLDSQD (80 aa).

Mg(2+) serves as cofactor.

In terms of biological role, nuclease. The polypeptide is Putative nuclease p44 (44) (Escherichia coli (Bacteriophage APSE-1)).